A 245-amino-acid polypeptide reads, in one-letter code: Glutathione S-transferase T1 (245 aa).

In terms of domain architecture, GST N-terminal spans 2–83; that stretch reads MKLKVYADRM…YLSSAFPSVA (82 aa). Glutathione contacts are provided by residues 12 to 13, 41 to 42, 54 to 55, and 67 to 68; these read SQ, QL, KV, and ES. Positions 90-233 constitute a GST C-terminal domain; the sequence is DLSKRAKIHS…KEGFQKRREM (144 aa). The Microbody targeting signal motif lies at 243 to 245; that stretch reads SKI.

Belongs to the GST superfamily. Theta family.

The protein localises to the nucleus. Its subcellular location is the peroxisome. The catalysed reaction is RX + glutathione = an S-substituted glutathione + a halide anion + H(+). Functionally, in vitro, possesses glutathione S-transferase activity toward 1-chloro-2,4-dinitrobenzene (CDNB) and p-nitrobenzyl chloride (pNBC), and glutathione peroxidase activity toward cumene hydroperoxide and linoleic acid-13-hydroperoxide. May be involved in the conjugation of reduced glutathione to a wide number of exogenous and endogenous hydrophobic electrophiles and have a detoxification role against certain herbicides. The chain is Glutathione S-transferase T1 (GSTT1) from Arabidopsis thaliana (Mouse-ear cress).